The sequence spans 433 residues: Sulfhydrylase FUB7 (433 aa).

Lys211 bears the N6-(pyridoxal phosphate)lysine mark.

This sequence belongs to the trans-sulfuration enzymes family. Requires pyridoxal 5'-phosphate as cofactor.

It participates in mycotoxin biosynthesis. Its function is as follows. Sulfhydrylase; part of the gene cluster that mediates the biosynthesis of fusaric acid, a mycotoxin with low to moderate toxicity to animals and humans, but with high phytotoxic properties. L-aspartate is suggested as fusaric acid amino acid precursor that is activated and further processed to O-acetyl-L-homoserine by cluster enzymes aspartate kinase FUB3 and homoserine O-acetyltransferase FUB5, as well as enzymes of the primary metabolism. The polyketide synthase (PKS) FUB1 generates the triketide trans-2-hexenal which is presumptively released by the hydrolase FUB4 and linked to the NRPS-bound amino acid precursor by NAD(P)-dependent dehydrogenase FUB6. FUB1, FUB4, and the non-canonical NRPS Fub8 may form an enzyme complex. Further processing of the NRPS-bound intermediate might be carried out by FUB6 and the O-acetylhomoserine FUB7, enabling a spontaneous electrocyclization to close the carbon backbone of fusaric acid. Dihydrofusaric acid is likely to be released via reduction by the thioester reductase (TR) domain of FUB8 whereupon the final oxidation to fusaric acid may (also) be performed by the FMN-dependent dehydrogenase FUB9. In Gibberella moniliformis (strain M3125 / FGSC 7600) (Maize ear and stalk rot fungus), this protein is Sulfhydrylase FUB7.